Here is a 783-residue protein sequence, read N- to C-terminus: B-cell scaffold protein with ankyrin repeats (783 aa).

Residues 1-154 (MLPVASGTRG…GYISVIRQIL (154 aa)) are interaction with ITPR2. The TIR domain maps to 25–153 (NAKDILLLYE…DGYISVIRQI (129 aa)). The DBB domain maps to 199 to 326 (VLPGEIPCEK…EIPYYEFKHL (128 aa)). ANK repeat units follow at residues 341–370 (ELPTLLHCAAKFGLKNLALHLLQCSGATRA) and 377–407 (DGSDLLHIAERHGHEELKEVFEDFLSQNTGR). 4 disordered regions span residues 422–521 (FSTY…AASQ), 538–586 (MERS…EDNE), 604–624 (SFIINRPPAPTPRPTHIPPKE), and 641–670 (RQSDGDKFYSLPKKPDKTRMEGPTFPSTRD). A compositionally biased stretch (basic and acidic residues) spans 444–479 (RNTDRSEEPERSVEMKEEEAGAEARRSLSEGERESS). Pro residues predominate over residues 505 to 515 (HCRPPLLPPRP). The segment covering 549 to 565 (ARPETREESSREEKKEE) has biased composition (basic and acidic residues). A compositionally biased stretch (acidic residues) spans 566–586 (AQEEEEEEENPYAFAETEDNE). Pro residues predominate over residues 610–620 (PPAPTPRPTHI). Residues 641–660 (RQSDGDKFYSLPKKPDKTRM) are compositionally biased toward basic and acidic residues. Tyrosine 649 bears the Phosphotyrosine mark.

In terms of assembly, interacts with LYN, ITPR1 and ITPR2. In terms of processing, phosphorylated on tyrosines upon BCR activation. Specifically expressed in spleen. Highly expressed in immature B-cells and recirculating B-cells, and at low levels in pro-B and pre-B cells.

Involved in B-cell receptor (BCR)-induced Ca(2+) mobilization from intracellular stores. Promotes Lyn-mediated phosphorylation of IP3 receptors 1 and 2. In Mus musculus (Mouse), this protein is B-cell scaffold protein with ankyrin repeats (Bank1).